The primary structure comprises 435 residues: UPF0761 membrane protein mma_2179 (435 aa).

A run of 6 helical transmembrane segments spans residues 45-65 (VLALVPILTIALAIFTTFPLF), 103-123 (LSAFGAVALIVTAVAMMLMID), 142-162 (ILVYWAIVTLGPLLIGASMTF), 177-197 (VPFVGAVFYTSISILLSMVAF), 208-228 (LVEWRDAVVGGLLAAIAFEIV), and 252-272 (FPIFLVWVYLGWLITLAGAVV).

It belongs to the UPF0761 family.

It is found in the cell inner membrane. This chain is UPF0761 membrane protein mma_2179, found in Janthinobacterium sp. (strain Marseille) (Minibacterium massiliensis).